A 288-amino-acid polypeptide reads, in one-letter code: 2-dehydro-3-deoxyphosphooctonate aldolase (288 aa).

It belongs to the KdsA family.

Its subcellular location is the cytoplasm. The enzyme catalyses D-arabinose 5-phosphate + phosphoenolpyruvate + H2O = 3-deoxy-alpha-D-manno-2-octulosonate-8-phosphate + phosphate. Its pathway is carbohydrate biosynthesis; 3-deoxy-D-manno-octulosonate biosynthesis; 3-deoxy-D-manno-octulosonate from D-ribulose 5-phosphate: step 2/3. It participates in bacterial outer membrane biogenesis; lipopolysaccharide biosynthesis. This Bdellovibrio bacteriovorus (strain ATCC 15356 / DSM 50701 / NCIMB 9529 / HD100) protein is 2-dehydro-3-deoxyphosphooctonate aldolase.